The following is a 298-amino-acid chain: MTEPGASPEDPWVKASFADAHAGEGRAGRARARRGSGRRGAPQLSPESPLLSGARGCREDSSHPACAKVEYAYSDNSLDPGLFVESTHKGSVVSRANSIGSTSASSVPNTDDEDSDYQQEAYKESYKDRRRRAHTQAEQKRRDAIKRGYDDLQTIVPTCQQQDFSIGSQKLSKAIVLQKTIDYIQFLHKEKKKQEEEVSTLRKDVTALKIMKVNYEQIVKAHQDNPHEGEDQVSDQVKFNVFQGIMDSLFQSFNASISVASFQELSACVFSWIEEHCEPQTLREIVIGVLHQLKNQLY.

The interval 1–63 is disordered; sequence MTEPGASPED…ARGCREDSSH (63 aa). Residue Ser7 is modified to Phosphoserine. Over residues 28 to 37 the composition is skewed to basic residues; the sequence is GRARARRGSG. Phosphoserine occurs at positions 45, 48, 74, 77, and 98. Positions 98–109 are enriched in polar residues; the sequence is SIGSTSASSVPN. Residues 98-119 are disordered; the sequence is SIGSTSASSVPNTDDEDSDYQQ. The bHLH domain occupies 129–187; it reads RRRRAHTQAEQKRRDAIKRGYDDLQTIVPTCQQQDFSIGSQKLSKAIVLQKTIDYIQFL. A leucine-zipper region spans residues 194-214; sequence QEEEVSTLRKDVTALKIMKVN.

Efficient DNA binding requires dimerization with another bHLH protein. Binds DNA as a heterodimer with MAD1, MAD4, MNT, WBSCR14 and MLXIP. Can also bind DNA as a homodimer. In terms of tissue distribution, expressed in all tissues examined: stomach, duodenum, jejunum, ileum, colon, liver, pancreas, salivary gland, kidney, spleen, lung, heart, skeletal muscle, brain, ovary and testis.

It localises to the cytoplasm. The protein resides in the nucleus. Its function is as follows. Transcription regulator. Forms a sequence-specific DNA-binding protein complex with MAD1, MAD4, MNT, WBSCR14 and MLXIP which recognizes the core sequence 5'-CACGTG-3'. The TCFL4-MAD1, TCFL4-MAD4, TCFL4-WBSCR14 complexes are transcriptional repressors. Plays a role in transcriptional activation of glycolytic target genes. Involved in glucose-responsive gene regulation. The protein is Max-like protein X (Mlx) of Mus musculus (Mouse).